Here is a 457-residue protein sequence, read N- to C-terminus: Glucuronide carrier protein homolog (457 aa).

At 1-11 (MNQQLSWRTIV) the chain is on the cytoplasmic side. A helical transmembrane segment spans residues 12–34 (GYSLGDVANNFAFAMGALFLLSY). The Periplasmic portion of the chain corresponds to 35-37 (YTD). A helical membrane pass occupies residues 38-60 (VAGVGAAAAGTMLLLVRVFDAFA). At 61-79 (DVFAGRVVDSVNTRWGKFR) the chain is on the cytoplasmic side. A helical membrane pass occupies residues 80-100 (PFLLFGTAPLMIFSVLVFWVL). The Periplasmic segment spans residues 101-108 (TDWSHGSK). The chain crosses the membrane as a helical span at residues 109 to 129 (VVYAYLTYMGLGLCYSLVNIP). The Cytoplasmic segment spans residues 130 to 146 (YGSLATAMTQQPQSRAR). The helical transmembrane segment at 147 to 167 (LGAARGIAASLTFVCLAFLIG) threads the bilayer. Over 168-180 (PSIKNSSPEEMVS) the chain is Periplasmic. The helical transmembrane segment at 181 to 201 (VYHFWTIVLAIAGMVLYFICF) threads the bilayer. Residues 202–228 (KSTRENVVRIVAQPSLNISLQTLKRNR) are Cytoplasmic-facing. Residues 229-249 (PLFMLCIGALCVLISTFAVSA) form a helical membrane-spanning segment. At 250 to 263 (SSLFYVRYVLNDTG) the chain is on the periplasmic side. A helical transmembrane segment spans residues 264 to 284 (LFTVLVLVQNLVGTVASAPLV). The Cytoplasmic portion of the chain corresponds to 285–296 (PGMVARIGKKNT). Residues 297 to 316 (FLIGALLGTCGYLLFFWVSV) form a helical membrane-spanning segment. Residues 317-320 (WSLP) are Periplasmic-facing. A helical membrane pass occupies residues 321 to 343 (VALVALAIASIGQGVTMTVMWAL). At 344 to 372 (EADTVEYGEYLTGVRIEGLTYSLFSFTRK) the chain is on the cytoplasmic side. Residues 373–393 (CGQAIGGSIPAFILGLSGYIA) form a helical membrane-spanning segment. Topologically, residues 394-408 (NQVQTPEVIMGIRTS) are periplasmic. A helical membrane pass occupies residues 409–429 (IALVPCGFMLLAFVIIWFYPL). Residues 430 to 457 (TDKKFKEIVVEIDNRKKVQQQLISDITN) are Cytoplasmic-facing.

Belongs to the sodium:galactoside symporter (TC 2.A.2) family.

The protein resides in the cell inner membrane. This Escherichia coli (strain K12) protein is Glucuronide carrier protein homolog (uidB).